The chain runs to 428 residues: Cytochrome c biogenesis protein CcsB (428 aa).

A run of 3 helical transmembrane segments spans residues 14–34 (LRFA…GTFI), 72–92 (SFWF…CSFR), and 162–182 (IGPL…AYGS).

It belongs to the Ccs1/CcsB family. In terms of assembly, may interact with CcsA.

It is found in the cellular thylakoid membrane. Required during biogenesis of c-type cytochromes (cytochrome c6 and cytochrome f) at the step of heme attachment. This chain is Cytochrome c biogenesis protein CcsB, found in Prochlorococcus marinus (strain AS9601).